We begin with the raw amino-acid sequence, 461 residues long: Ornithine decarboxylase (461 aa).

N6-(pyridoxal phosphate)lysine is present on lysine 69. Pyridoxal 5'-phosphate is bound by residues serine 200, glycine 237, and 274-277 (EPGR). Serine 303 is subject to Phosphoserine; by CK2. 331–332 (YD) is a binding site for substrate. Cysteine 360 functions as the Proton donor; shared with dimeric partner in the catalytic mechanism. Residue cysteine 360 is modified to S-nitrosocysteine. Position 361 (aspartate 361) interacts with substrate. Tyrosine 389 is a pyridoxal 5'-phosphate binding site.

Belongs to the Orn/Lys/Arg decarboxylase class-II family. Homodimer. Only the dimer is catalytically active, as the active sites are constructed of residues from both monomers. Does not form a heterodimer with AZIN2. Requires pyridoxal 5'-phosphate as cofactor. In terms of tissue distribution, expressed during testis development in the outer part of the seminiferous tubules.

It carries out the reaction L-ornithine + H(+) = putrescine + CO2. The protein operates within amine and polyamine biosynthesis; putrescine biosynthesis via L-ornithine pathway; putrescine from L-ornithine: step 1/1. Its activity is regulated as follows. Inhibited by antizymes (AZs) OAZ1, OAZ2 and OAZ3 in response to polyamine levels. AZs inhibit the assembly of the functional homodimer by binding to ODC monomers. Additionally, OAZ1 targets ODC monomers for ubiquitin-independent proteolytic destruction by the 26S proteasome. Its function is as follows. Catalyzes the first and rate-limiting step of polyamine biosynthesis that converts ornithine into putrescine, which is the precursor for the polyamines, spermidine and spermine. Polyamines are essential for cell proliferation and are implicated in cellular processes, ranging from DNA replication to apoptosis. The protein is Ornithine decarboxylase (Odc1) of Mus musculus (Mouse).